The following is a 227-amino-acid chain: Biosynthetic peptidoglycan transglycosylase (227 aa).

Residues 7–27 (VALLTLLLLVAAPYVLTLVYG) form a helical membrane-spanning segment.

It belongs to the glycosyltransferase 51 family.

It is found in the cell inner membrane. The catalysed reaction is [GlcNAc-(1-&gt;4)-Mur2Ac(oyl-L-Ala-gamma-D-Glu-L-Lys-D-Ala-D-Ala)](n)-di-trans,octa-cis-undecaprenyl diphosphate + beta-D-GlcNAc-(1-&gt;4)-Mur2Ac(oyl-L-Ala-gamma-D-Glu-L-Lys-D-Ala-D-Ala)-di-trans,octa-cis-undecaprenyl diphosphate = [GlcNAc-(1-&gt;4)-Mur2Ac(oyl-L-Ala-gamma-D-Glu-L-Lys-D-Ala-D-Ala)](n+1)-di-trans,octa-cis-undecaprenyl diphosphate + di-trans,octa-cis-undecaprenyl diphosphate + H(+). The protein operates within cell wall biogenesis; peptidoglycan biosynthesis. Peptidoglycan polymerase that catalyzes glycan chain elongation from lipid-linked precursors. The chain is Biosynthetic peptidoglycan transglycosylase from Rhodopseudomonas palustris (strain HaA2).